A 686-amino-acid chain; its full sequence is Leucine-rich repeat-containing protein 49 (686 aa).

LRR repeat units follow at residues 113 to 134 (HLRLLNFQHNFITRIQNISNLQ), 135 to 156 (KLISLDLYDNQIEEISGLSTLR), 157 to 178 (CLRVLLLGKNRIKKISNLENLK), 179 to 200 (SLDVLDLHGNQITKIENINHLC), 201 to 222 (ELRVLNLARNFLSHVDNLNGLD), 223 to 244 (SLTELNLRHNQITFVRDVDNLP), and 245 to 266 (CLQHLFLSFNNISSFDSVSCLA). An LRRCT domain is found at 279–317 (NPIAQESWYKHTVLQNMMQLRQLDMKRITEEERRMASVL). Residues 303–341 (MKRITEEERRMASVLAKKEEEKKRESHKQSLLKEKKRLT) are a coiled coil. The tract at residues 360 to 388 (ATNEDRKDSDSPQDPCQIDGSTLSAFPEE) is disordered.

Part of the neuronal tubulin polyglutamylase complex which contains TPGS1, TPGS2, TTLL1, LRRC49 and NICN1. Interacts with PCM1; TTLL1, TPGS1, TPGS2 and LRRC49.

Its subcellular location is the cytoplasm. The protein resides in the cytoskeleton. It localises to the microtubule organizing center. It is found in the centrosome. The protein localises to the centriolar satellite. Its function is as follows. Subunit of the tubulin polyglutamylase complex (TPGC). The complex mediates cilia and flagella polyglutamylation which is essential for their biogenesis and motility. The protein is Leucine-rich repeat-containing protein 49 of Homo sapiens (Human).